The primary structure comprises 196 residues: Putative 3-methyladenine DNA glycosylase (196 aa).

This sequence belongs to the DNA glycosylase MPG family.

The polypeptide is Putative 3-methyladenine DNA glycosylase (Chlorobium phaeobacteroides (strain DSM 266 / SMG 266 / 2430)).